A 379-amino-acid chain; its full sequence is Cytochrome b (379 aa).

4 helical membrane-spanning segments follow: residues 33-53, 77-98, 113-133, and 178-198; these read FGSLLGMCLVIQILTGLFLAM, WLIRYLHANGASMFFICLFIHV, WNIGIILLLTTMATAFVGYVL, and FFAFHFILPFIIAAFALVHLL. 2 residues coordinate heme b: His83 and His97. Heme b-binding residues include His182 and His196. His201 contacts a ubiquinone. 4 helical membrane-spanning segments follow: residues 226-246, 288-308, 320-340, and 347-367; these read TKDLLGIFLLLLVLMILALFF, LGGVLALVLSILILATFPLLN, VTQVIYWIFIANLLVLTWIGG, and FTTIGQIASITYFAIIIILIP.

The protein belongs to the cytochrome b family. As to quaternary structure, the cytochrome bc1 complex contains 11 subunits: 3 respiratory subunits (MT-CYB, CYC1 and UQCRFS1), 2 core proteins (UQCRC1 and UQCRC2) and 6 low-molecular weight proteins (UQCRH/QCR6, UQCRB/QCR7, UQCRQ/QCR8, UQCR10/QCR9, UQCR11/QCR10 and a cleavage product of UQCRFS1). This cytochrome bc1 complex then forms a dimer. It depends on heme b as a cofactor.

It is found in the mitochondrion inner membrane. Its function is as follows. Component of the ubiquinol-cytochrome c reductase complex (complex III or cytochrome b-c1 complex) that is part of the mitochondrial respiratory chain. The b-c1 complex mediates electron transfer from ubiquinol to cytochrome c. Contributes to the generation of a proton gradient across the mitochondrial membrane that is then used for ATP synthesis. This is Cytochrome b (MT-CYB) from Akodon paranaensis (Parana grass mouse).